The chain runs to 921 residues: Guanylate kinase-associated protein mars (921 aa).

Residue Ser49 is modified to Phosphoserine. Residue Thr51 is modified to Phosphothreonine. Phosphoserine occurs at positions 76 and 170. Position 172 is a phosphotyrosine (Tyr172). Disordered regions lie at residues 179-208 and 273-325; these read GKGK…TVAA and RPTP…PLGN. 2 stretches are compositionally biased toward low complexity: residues 193–208 and 273–285; these read KPTS…TVAA and RPTP…AKTP. Ser444 is subject to Phosphoserine. Positions 500 to 531 are disordered; that stretch reads QTTVKEDTGDSTLVPEGTKTPPRRESNGMPNY. Thr519 is subject to Phosphothreonine. Ser554 is subject to Phosphoserine. Disordered stretches follow at residues 641-660 and 743-763; these read AGAT…SKPV and TKVE…RHSS. Phosphoserine occurs at positions 785 and 792. 2 disordered regions span residues 809-833 and 861-921; these read QNAA…TKRQ and ETVG…SEFM. Thr826 is modified (phosphothreonine). Positions 878-907 are enriched in polar residues; sequence EASTESGSLEQNPGRDSNQENEATPRTYTL.

The protein belongs to the SAPAP family. In terms of tissue distribution, expressed in the central nervous system and at different stages of gametogenesis. In embryos, it is expressed in central nervous system and brain. In testis, it is strongly expressed in pre-meiotic germ cells, but is not found in somatic or post-meiotic cells.

The protein localises to the cell membrane. It localises to the nucleus. The protein resides in the nucleoplasm. Its subcellular location is the cytoplasm. It is found in the cytoskeleton. The protein localises to the spindle. In terms of biological role, cell cycle regulator. The protein is Guanylate kinase-associated protein mars (mars) of Drosophila melanogaster (Fruit fly).